We begin with the raw amino-acid sequence, 261 residues long: Ribonuclease HII (261 aa).

The RNase H type-2 domain occupies 72–260 (AVICGIDEVG…IKSIVLEKLD (189 aa)). Positions 78, 79, and 170 each coordinate a divalent metal cation.

Belongs to the RNase HII family. Mn(2+) is required as a cofactor. Requires Mg(2+) as cofactor.

The protein localises to the cytoplasm. It carries out the reaction Endonucleolytic cleavage to 5'-phosphomonoester.. Endonuclease that specifically degrades the RNA of RNA-DNA hybrids. The protein is Ribonuclease HII of Staphylococcus carnosus (strain TM300).